Consider the following 390-residue polypeptide: Carbamoyl phosphate synthase small chain (390 aa).

Residues 1–198 (MTSTPTPTPT…LGEGYAVGPE (198 aa)) form a CPSase region. L-glutamine is bound by residues Ser53, Gly250, and Gly252. The 189-residue stretch at 202-390 (RVVVLDYGVK…VGELKGRVEA (189 aa)) folds into the Glutamine amidotransferase type-1 domain. Catalysis depends on Cys279, which acts as the Nucleophile. Positions 280, 283, 321, 323, and 324 each coordinate L-glutamine. Active-site residues include His363 and Glu365.

This sequence belongs to the CarA family. Composed of two chains; the small (or glutamine) chain promotes the hydrolysis of glutamine to ammonia, which is used by the large (or ammonia) chain to synthesize carbamoyl phosphate. Tetramer of heterodimers (alpha,beta)4.

It catalyses the reaction hydrogencarbonate + L-glutamine + 2 ATP + H2O = carbamoyl phosphate + L-glutamate + 2 ADP + phosphate + 2 H(+). The enzyme catalyses L-glutamine + H2O = L-glutamate + NH4(+). It functions in the pathway amino-acid biosynthesis; L-arginine biosynthesis; carbamoyl phosphate from bicarbonate: step 1/1. It participates in pyrimidine metabolism; UMP biosynthesis via de novo pathway; (S)-dihydroorotate from bicarbonate: step 1/3. Functionally, small subunit of the glutamine-dependent carbamoyl phosphate synthetase (CPSase). CPSase catalyzes the formation of carbamoyl phosphate from the ammonia moiety of glutamine, carbonate, and phosphate donated by ATP, constituting the first step of 2 biosynthetic pathways, one leading to arginine and/or urea and the other to pyrimidine nucleotides. The small subunit (glutamine amidotransferase) binds and cleaves glutamine to supply the large subunit with the substrate ammonia. This is Carbamoyl phosphate synthase small chain from Maricaulis maris (strain MCS10) (Caulobacter maris).